Reading from the N-terminus, the 569-residue chain is Aspartate--tRNA ligase, cytoplasmic 2 (569 aa).

A disordered region spans residues 1-23; the sequence is MSEENNHKEKSKNEIKKEKKKIE. Positions 292–295 are aspartate; the sequence is QFYR. Arginine 314 provides a ligand contact to L-aspartate. Residues 314–316 and 322–324 contribute to the ATP site; these read RTD and RHL. 2 residues coordinate L-aspartate: serine 475 and arginine 479. 540–543 serves as a coordination point for ATP; sequence GLER.

It belongs to the class-II aminoacyl-tRNA synthetase family. Type 2 subfamily.

It localises to the cytoplasm. The enzyme catalyses tRNA(Asp) + L-aspartate + ATP = L-aspartyl-tRNA(Asp) + AMP + diphosphate. This Dictyostelium discoideum (Social amoeba) protein is Aspartate--tRNA ligase, cytoplasmic 2 (aspS2).